The following is a 95-amino-acid chain: Co-chaperonin GroES (95 aa).

This sequence belongs to the GroES chaperonin family. Heptamer of 7 subunits arranged in a ring. Interacts with the chaperonin GroEL.

It localises to the cytoplasm. Its function is as follows. Together with the chaperonin GroEL, plays an essential role in assisting protein folding. The GroEL-GroES system forms a nano-cage that allows encapsulation of the non-native substrate proteins and provides a physical environment optimized to promote and accelerate protein folding. GroES binds to the apical surface of the GroEL ring, thereby capping the opening of the GroEL channel. The sequence is that of Co-chaperonin GroES from Oleidesulfovibrio alaskensis (strain ATCC BAA-1058 / DSM 17464 / G20) (Desulfovibrio alaskensis).